The chain runs to 208 residues: Probable nicotinate-nucleotide adenylyltransferase (208 aa).

This sequence belongs to the NadD family.

The catalysed reaction is nicotinate beta-D-ribonucleotide + ATP + H(+) = deamido-NAD(+) + diphosphate. The protein operates within cofactor biosynthesis; NAD(+) biosynthesis; deamido-NAD(+) from nicotinate D-ribonucleotide: step 1/1. Functionally, catalyzes the reversible adenylation of nicotinate mononucleotide (NaMN) to nicotinic acid adenine dinucleotide (NaAD). In Symbiobacterium thermophilum (strain DSM 24528 / JCM 14929 / IAM 14863 / T), this protein is Probable nicotinate-nucleotide adenylyltransferase.